We begin with the raw amino-acid sequence, 438 residues long: MISLRHTALGLALSLAFTGQALAVTTIPFWHSMEGELGKEVDSLAQRFNQANPDYKIVPVYKGNYEQNLSAGIAAFRTGNAPAILQVYEVGTATMMASKAIKPVYEVFKDAGINFDESQFVPTVAGYYTDAKSGHLLSQPFNSSTPVLYYNKDAFKKAGLDPEQPPKTWQELADYTAKLRAAGMKCGYASGWQGWIQLENFSAWNGLPFASKNNGFDGTDAVLEFNKPEQVKHIALLEEMNKKGDFSYVGRKDESTEKFYNGDCAMTTASSGSLANIRQYAKFNYGVGMMPYDADIKGAPQNAIIGGASLWVMQGKDKETYTGVAKFLDFLAKPENAAEWHQKTGYLPITTAAYELTREQGYYDKNPGADIATRQMLNKPPLPFTKGLRLGNMPQIRTIVDEELESVWTGKKTPQQALDTAVDRGNQLLRRFEKASKS.

Residues 1 to 23 (MISLRHTALGLALSLAFTGQALA) form the signal peptide. The sn-glycerol 3-phosphate site is built by Tyr-65, Glu-89, Ser-144, Ser-270, Gly-307, Tyr-346, and Arg-397.

This sequence belongs to the bacterial solute-binding protein 1 family. In terms of assembly, the complex is composed of two ATP-binding proteins (UgpC), two transmembrane proteins (UgpA and UgpE) and a solute-binding protein (UgpB).

It localises to the periplasm. Functionally, part of the ABC transporter complex UgpBAEC involved in sn-glycerol-3-phosphate (G3P) import. Binds G3P. This chain is sn-glycerol-3-phosphate-binding periplasmic protein UgpB (ugpB), found in Salmonella typhi.